The primary structure comprises 385 residues: Acetate kinase (385 aa).

Residue Asn-9 coordinates Mg(2+). Lys-16 provides a ligand contact to ATP. Arg-87 is a binding site for substrate. Catalysis depends on Asp-144, which acts as the Proton donor/acceptor. Residues 202–206 (HLGSG) and 277–279 (DMR) each bind ATP. Glu-373 is a Mg(2+) binding site.

Belongs to the acetokinase family. In terms of assembly, homodimer. Mg(2+) is required as a cofactor. Mn(2+) serves as cofactor.

It localises to the cytoplasm. The catalysed reaction is acetate + ATP = acetyl phosphate + ADP. It participates in metabolic intermediate biosynthesis; acetyl-CoA biosynthesis; acetyl-CoA from acetate: step 1/2. In terms of biological role, catalyzes the formation of acetyl phosphate from acetate and ATP. Can also catalyze the reverse reaction. The protein is Acetate kinase of Rickettsia felis (strain ATCC VR-1525 / URRWXCal2) (Rickettsia azadi).